The following is a 135-amino-acid chain: Gene 52 protein (135 aa).

2 disordered regions span residues 1 to 20 (MASGGGGGSKRCPKKQPTPE) and 110 to 135 (LGGRASSDSSKASKPRGRSKHRAEKQ). Over residues 122–135 (SKPRGRSKHRAEKQ) the composition is skewed to basic residues.

It belongs to the herpesviridae BLRF2 family.

This Equine herpesvirus 2 (strain 86/87) (EHV-2) protein is Gene 52 protein (52).